The chain runs to 59 residues: Cuticle protein 7 isoform c (59 aa).

Gln1 carries the post-translational modification Pyrrolidone carboxylic acid.

This chain is Cuticle protein 7 isoform c, found in Limulus polyphemus (Atlantic horseshoe crab).